Here is a 238-residue protein sequence, read N- to C-terminus: Opacity protein opA60 (238 aa).

Ala-1 is a signal peptide.

It belongs to the opacity porin family.

It localises to the cell outer membrane. Its function is as follows. Implicated in a number of adherence functions. OPA proteins are implicated in pathogenesis and are subject to phase variation. This chain is Opacity protein opA60 (opaH), found in Neisseria gonorrhoeae.